Here is a 383-residue protein sequence, read N- to C-terminus: tRNA-specific 2-thiouridylase MnmA (383 aa).

ATP-binding positions include 9-16 (GMSGGVDS) and methionine 35. An interaction with target base in tRNA region spans residues 95-97 (NPD). Cysteine 100 acts as the Nucleophile in catalysis. A disulfide bridge connects residues cysteine 100 and cysteine 196. An ATP-binding site is contributed by glycine 124. The interval 146-148 (KDQ) is interaction with tRNA. Catalysis depends on cysteine 196, which acts as the Cysteine persulfide intermediate. Positions 308–309 (RY) are interaction with tRNA.

This sequence belongs to the MnmA/TRMU family.

It localises to the cytoplasm. The enzyme catalyses S-sulfanyl-L-cysteinyl-[protein] + uridine(34) in tRNA + AH2 + ATP = 2-thiouridine(34) in tRNA + L-cysteinyl-[protein] + A + AMP + diphosphate + H(+). Catalyzes the 2-thiolation of uridine at the wobble position (U34) of tRNA, leading to the formation of s(2)U34. In Burkholderia mallei (strain NCTC 10247), this protein is tRNA-specific 2-thiouridylase MnmA.